Here is a 250-residue protein sequence, read N- to C-terminus: U6 snRNA phosphodiesterase 1 (250 aa).

Residues 1–31 (MALVSYSSSEEDEGETSEPPGRRLPPLPPPT) form a disordered region. The span at 22–31 (RRLPPLPPPT) shows a compositional bias: pro residues. H105 (proton acceptor) is an active-site residue. 105-107 (HIS) is a binding site for AMP. UMP is bound by residues Q149, Y187, and 191 to 195 (SFHVS). Residues Y187 and 189–195 (EPSFHVS) each bind AMP. H193 (proton donor) is an active-site residue.

The protein belongs to the 2H phosphoesterase superfamily. USB1 family.

It is found in the nucleus. The catalysed reaction is a 3'-end uridylyl-uridine-RNA = a 3'-end 2',3'-cyclophospho-uridine-RNA + uridine. It carries out the reaction a 3'-end uridylyl-adenosine-RNA = a 3'-end 2',3'-cyclophospho-uridine-RNA + adenosine. 3'-5' RNA exonuclease that trims the 3' end of oligo(U) and oligo(A) tracts of the pre-U6 small nuclear RNA (snRNA) molecule, leading to the formation of a mature U6 snRNA 3' end-terminated with a 2',3'-cyclic phosphate. Participates in the U6 snRNA 3' end processing that prevents U6 snRNA degradation. In addition also removes uridines from the 3' end of U6atac snRNA and possibly the vault RNA VTRNA1-1. The chain is U6 snRNA phosphodiesterase 1 from Xenopus laevis (African clawed frog).